The chain runs to 155 residues: UPF0461 protein C5orf24 homolog (155 aa).

The segment covering 1-10 (MMHPVASSNP) has biased composition (polar residues). Positions 1 to 20 (MMHPVASSNPAFCGPGKPSC) are disordered. The residue at position 37 (S37) is a Phosphoserine. A disordered region spans residues 40 to 155 (SKYSHTVNHK…QQAFRCSSDA (116 aa)). The span at 57-70 (DPLNETHLQTTSGR) shows a compositional bias: polar residues. K75 participates in a covalent cross-link: Glycyl lysine isopeptide (Lys-Gly) (interchain with G-Cter in SUMO2). Basic residues predominate over residues 80–92 (KKKNLNRSGKRGR). The segment covering 94–107 (SGTTKSAGYRTSTG) has biased composition (polar residues). S121 is subject to Phosphoserine.

It belongs to the UPF0461 family.

This is UPF0461 protein C5orf24 homolog from Pongo abelii (Sumatran orangutan).